A 405-amino-acid chain; its full sequence is MERWPWPSGGAWLLVAARALLQLLRSDLRLGRPLLAALALLAALDWLCQRLLPPPAALAVLAAAGWIALSRLARPQRLPVATRAVLITGCDSGFGKETAKKLDSMGFTVLATVLELNSPGAIELRTCCSPRLRLLQMDLTKPGDISRVLEFTKAHTTSTGLWGLVNNAGHNEVVADAELSPVATFRSCMEVNFFGALELTKGLLPLLRSSRGRIVTVGSPAGDMPYPCLGAYGTSKAAVALLMDTFSCELLPWGVKVSIIQPGCFKTESVRNVGQWEKRKQLLLANLPQELLQAYGKDYIEHLHGQFLHSLRLAMSDLTPVVDAITDALLAARPRRRYYPGQGLGLMYFIHYYLPEGLRRRFLQAFFISHCLPRALQPGQPGTTPPQDAAQDPNLSPGPSPAVAR.

82–111 lines the NAD(+) pocket; sequence TRAVLITGCDSGFGKETAKKLDSMGFTVLA. Serine 219 serves as a coordination point for substrate. Tyrosine 232 (proton acceptor) is an active-site residue. The interval 335–339 is essential for protein stability; sequence RRRYY. Residues 377–387 are compositionally biased toward low complexity; it reads QPGQPGTTPPQ. A disordered region spans residues 377-405; that stretch reads QPGQPGTTPPQDAAQDPNLSPGPSPAVAR. Residues 396 to 405 are compositionally biased toward pro residues; that stretch reads SPGPSPAVAR.

Belongs to the short-chain dehydrogenases/reductases (SDR) family. As to quaternary structure, interacts with ligand-free cytoplasmic NR3C2. In terms of tissue distribution, expressed in kidney, placenta, pancreas, prostate, ovary, small intestine and colon, and in lower levels in the spleen and testis. At midgestation, expressed at high levels in placenta and in fetal kidney and, at much lower levels, in fetal lung and testis.

Its subcellular location is the microsome. It is found in the endoplasmic reticulum. It carries out the reaction an 11beta-hydroxysteroid + NAD(+) = an 11-oxosteroid + NADH + H(+). The enzyme catalyses cortisol + NAD(+) = cortisone + NADH + H(+). The catalysed reaction is corticosterone + NAD(+) = 11-dehydrocorticosterone + NADH + H(+). It catalyses the reaction 11beta,17beta-dihydroxyandrost-4-ene-3-one + NAD(+) = 17beta-hydroxyandrost-4-ene-3,11-dione + NADH + H(+). It carries out the reaction 11beta-hydroxyandrost-4-ene-3,17-dione + NAD(+) = androst-4-ene-3,11,17-trione + NADH + H(+). It participates in steroid metabolism. Inhibited by glycyrrhetinic acid (derived from liquorice). In terms of biological role, catalyzes the conversion of biologically active 11beta-hydroxyglucocorticoids (11beta-hydroxysteroid) such as cortisol, to inactive 11-ketoglucocorticoids (11-oxosteroid) such as cortisone, in the presence of NAD(+). Functions as a dehydrogenase (oxidase), thereby decreasing the concentration of active glucocorticoids, thus protecting the nonselective mineralocorticoid receptor from occupation by glucocorticoids. Plays an important role in maintaining glucocorticoids balance during preimplantation and protects the fetus from excessive maternal corticosterone exposure. Catalyzes the oxidation of 11beta-hydroxytestosterone (11beta,17beta-dihydroxyandrost-4-ene-3-one) to 11-ketotestosterone (17beta-hydroxyandrost-4-ene-3,11-dione), a major bioactive androgen. Catalyzes the conversion of 11beta-hydroxyandrostenedione (11beta-hydroxyandrost-4-ene-3,17-dione) to 11-ketoandrostenedione (androst-4-ene-3,11,17-trione), which can be further metabolized to 11-ketotestosterone. Converts 7-beta-25-dihydroxycholesterol to 7-oxo-25-hydroxycholesterol in vitro. 7-beta-25-dihydroxycholesterol (not 7-oxo-25-hydroxycholesterol) acts as a ligand for the G-protein-coupled receptor (GPCR) Epstein-Barr virus-induced gene 2 (EBI2) and may thereby regulate immune cell migration. May protect ovulating oocytes and fertilizing spermatozoa from the adverse effects of cortisol. This chain is 11-beta-hydroxysteroid dehydrogenase type 2, found in Homo sapiens (Human).